The sequence spans 350 residues: 3-dehydroquinate synthase (350 aa).

NAD(+) is bound by residues 63 to 68 (DGEEYK), 97 to 101 (GVIGD), 121 to 122 (TT), Lys134, Lys143, and 161 to 164 (FLKT). Positions 176, 235, and 252 each coordinate Zn(2+).

It belongs to the sugar phosphate cyclases superfamily. Dehydroquinate synthase family. Requires Co(2+) as cofactor. Zn(2+) serves as cofactor. The cofactor is NAD(+).

It localises to the cytoplasm. The enzyme catalyses 7-phospho-2-dehydro-3-deoxy-D-arabino-heptonate = 3-dehydroquinate + phosphate. The protein operates within metabolic intermediate biosynthesis; chorismate biosynthesis; chorismate from D-erythrose 4-phosphate and phosphoenolpyruvate: step 2/7. Its function is as follows. Catalyzes the conversion of 3-deoxy-D-arabino-heptulosonate 7-phosphate (DAHP) to dehydroquinate (DHQ). The sequence is that of 3-dehydroquinate synthase from Sulfurovum sp. (strain NBC37-1).